Reading from the N-terminus, the 649-residue chain is Vitamin K-dependent protein S (649 aa).

A propeptide spanning residues 1-14 (SKQQASQVLVRKRR) is cleaved from the precursor. Residues 15–60 (ANSMLEETKQGNLERECIEELCNKEEAREVFENDPETDYFYPKYLV) form the Gla domain. 4-carboxyglutamate is present on residues E20, E21, E28, E30, E33, E34, E39, E40, E43, E46, and E50. C31 and C36 are disulfide-bonded. The interval 61-89 (CLRSFQSGLFTAARQSTDAYPDLRSCVNA) is thrombin-sensitive. Residues 90-128 (IPDQCSPLPCNEDGYMSCKDGKASFTCTCKPGWQGERCE) enclose the EGF-like 1 domain. 13 disulfides stabilise this stretch: C94-C107, C99-C116, C118-C127, C134-C148, C144-C157, C159-C172, C178-C190, C185-C199, C201-C214, C220-C229, C225-C238, C240-C255, and C422-C448. D109 carries the (3R)-3-hydroxyaspartate modification. Residues 130–173 (DINECKDPSNINGGCSQICDNTPGSYHCSCKSGFVMLSNKKDCK) form the EGF-like 2; calcium-binding domain. The EGF-like 3; calcium-binding domain occupies 174–215 (DVDECSLKPNMCGTAVCKNIPGDFECECPEGYRYNLKSKSCE). One can recognise an EGF-like 4; calcium-binding domain in the interval 216 to 256 (DVDECSENMCAQLCVNYPGGYTCYCDGKKGFKLAQDQKSCE). 2 consecutive Laminin G-like domains span residues 272 to 448 (LLYL…NKHC) and 457 to 639 (YYPG…AHSC). Residues N472, N482, and N503 are each glycosylated (N-linked (GlcNAc...) asparagine). An intrachain disulfide couples C612 to C639.

In terms of processing, the iron and 2-oxoglutarate dependent 3-hydroxylation of aspartate and asparagine is (R) stereospecific within EGF domains. In terms of tissue distribution, plasma.

The protein resides in the secreted. Functionally, anticoagulant plasma protein; it is a cofactor to activated protein C in the degradation of coagulation factors Va and VIIIa. It helps to prevent coagulation and stimulating fibrinolysis. This is Vitamin K-dependent protein S (PROS1) from Macaca mulatta (Rhesus macaque).